The primary structure comprises 1038 residues: uncharacterized protein (1038 aa).

Residues Met-1–Gly-14 show a composition bias toward polar residues. The disordered stretch occupies residues Met-1–Ser-100. Residues Asn-58–Ile-71 show a composition bias toward basic and acidic residues. Positions Ile-72 to Asn-83 are enriched in acidic residues. Phosphoserine is present on residues Ser-112, Ser-113, and Ser-114. Disordered regions lie at residues Gly-144 to Arg-201, Glu-360 to Ala-381, Ser-422 to Leu-441, Gln-454 to Leu-526, and Thr-556 to Thr-575. A compositionally biased stretch (low complexity) spans Ser-156–Gln-179. The span at Asp-180–Val-198 shows a compositional bias: basic and acidic residues. Composition is skewed to basic and acidic residues over residues His-426–Leu-441 and Asp-489–Pro-505. Position 436 is a phosphoserine (Ser-436). Residues Ser-506–Pro-522 show a composition bias toward polar residues. Phosphoserine is present on residues Ser-618 and Ser-856. Disordered regions lie at residues Arg-803 to Asp-864, Gly-940 to Arg-974, and Lys-1005 to Lys-1024. Residues Thr-826–Ser-859 are compositionally biased toward low complexity. The span at Val-955 to Arg-974 shows a compositional bias: polar residues. The span at Glu-1009–Ile-1020 shows a compositional bias: low complexity.

The protein localises to the cytoplasm. This is an uncharacterized protein from Schizosaccharomyces pombe (strain 972 / ATCC 24843) (Fission yeast).